A 332-amino-acid polypeptide reads, in one-letter code: HTH-type transcriptional regulator RegA (332 aa).

The region spanning 1–57 (MATSIKDVAREAGVSIATVSRVLNDIDVVNEDTKKKVLDAIKELGYRPNIVARSLKT) is the HTH lacI-type domain. Positions 5-24 (IKDVAREAGVSIATVSRVLN) form a DNA-binding region, H-T-H motif.

In terms of biological role, involved in the regulation of amylase production. The chain is HTH-type transcriptional regulator RegA (regA) from Clostridium saccharobutylicum.